We begin with the raw amino-acid sequence, 392 residues long: DNA-directed RNA polymerase subunit Rpo1C (392 aa).

Belongs to the RNA polymerase beta' chain family. As to quaternary structure, part of the RNA polymerase complex.

Its subcellular location is the cytoplasm. The enzyme catalyses RNA(n) + a ribonucleoside 5'-triphosphate = RNA(n+1) + diphosphate. Its function is as follows. DNA-dependent RNA polymerase (RNAP) catalyzes the transcription of DNA into RNA using the four ribonucleoside triphosphates as substrates. Forms part of the jaw domain. The sequence is that of DNA-directed RNA polymerase subunit Rpo1C from Metallosphaera sedula (strain ATCC 51363 / DSM 5348 / JCM 9185 / NBRC 15509 / TH2).